The sequence spans 546 residues: U3 small nucleolar RNA-associated protein 18 homolog (546 aa).

3 disordered regions span residues 1–55 (MSLS…LEES), 94–118 (SAVRQIPDYEDDGDDDEELSDEENG), and 177–205 (NPGTDWARPDSQIVDGESSDDDDTQDGGV). A compositionally biased stretch (basic and acidic residues) spans 13-23 (IKREELKKQYE). Residues 24–35 (DVEDEEEIGSDD) are compositionally biased toward acidic residues. Ser33 carries the post-translational modification Phosphoserine. The span at 45–55 (TEKEKQKLEES) shows a compositional bias: basic and acidic residues. Composition is skewed to acidic residues over residues 101–117 (DYEDDGDDDEELSDEEN) and 193–205 (ESSDDDDTQDGGV). WD repeat units lie at residues 242-281 (PSNGPINSVHFHQNAQLLLTAGLDRRLRFFQIDGKRNTKI), 372-411 (KMNGSVRSLAFSEDGKHLLSSGGDGQVYVWDLRTMKCLYK), 413-454 (VDEG…GGKR), and 509-545 (STMHYPRCLDFSPGSGFMAMGNAAGKVLLYKLHHYQN). The short motif at 389–404 (LLSSGGDGQVYVWDLR) is the DWD box element.

Belongs to the WD repeat UTP18 family.

It localises to the nucleus. It is found in the nucleolus. In terms of biological role, involved in nucleolar processing of pre-18S ribosomal RNA. The sequence is that of U3 small nucleolar RNA-associated protein 18 homolog from Arabidopsis thaliana (Mouse-ear cress).